The chain runs to 63 residues: Keratin-associated protein 19-7 (63 aa).

Belongs to the KRTAP type 19 family. Interacts with hair keratins.

In terms of biological role, in the hair cortex, hair keratin intermediate filaments are embedded in an interfilamentous matrix, consisting of hair keratin-associated proteins (KRTAP), which are essential for the formation of a rigid and resistant hair shaft through their extensive disulfide bond cross-linking with abundant cysteine residues of hair keratins. The matrix proteins include the high-sulfur and high-glycine-tyrosine keratins. This chain is Keratin-associated protein 19-7 (KRTAP19-7), found in Homo sapiens (Human).